We begin with the raw amino-acid sequence, 309 residues long: Protein FdhE (309 aa).

It belongs to the FdhE family.

Its subcellular location is the cytoplasm. Necessary for formate dehydrogenase activity. The polypeptide is Protein FdhE (Escherichia coli (strain K12 / MC4100 / BW2952)).